The following is a 296-amino-acid chain: Sulfate adenylyltransferase subunit 2 (296 aa).

This sequence belongs to the PAPS reductase family. CysD subfamily. In terms of assembly, heterodimer composed of CysD, the smaller subunit, and CysN.

The catalysed reaction is sulfate + ATP + H(+) = adenosine 5'-phosphosulfate + diphosphate. It functions in the pathway sulfur metabolism; hydrogen sulfide biosynthesis; sulfite from sulfate: step 1/3. Functionally, with CysN forms the ATP sulfurylase (ATPS) that catalyzes the adenylation of sulfate producing adenosine 5'-phosphosulfate (APS) and diphosphate, the first enzymatic step in sulfur assimilation pathway. APS synthesis involves the formation of a high-energy phosphoric-sulfuric acid anhydride bond driven by GTP hydrolysis by CysN coupled to ATP hydrolysis by CysD. In Rhodospirillum rubrum (strain ATCC 11170 / ATH 1.1.1 / DSM 467 / LMG 4362 / NCIMB 8255 / S1), this protein is Sulfate adenylyltransferase subunit 2.